We begin with the raw amino-acid sequence, 227 residues long: Peroxiredoxin 1 (227 aa).

The region spanning 6–161 (PLIGEKFPEM…ILRLIKSLQM (156 aa)) is the Thioredoxin domain. C48 functions as the Cysteine sulfenic acid (-SOH) intermediate in the catalytic mechanism. R124 is a binding site for substrate.

The protein belongs to the peroxiredoxin family. Prx6 subfamily. In terms of assembly, homodecamer. Pentamer of dimers that assemble into a ring structure.

The protein localises to the cytoplasm. The catalysed reaction is a hydroperoxide + [thioredoxin]-dithiol = an alcohol + [thioredoxin]-disulfide + H2O. Thiol-specific peroxidase that catalyzes the reduction of hydrogen peroxide and organic hydroperoxides to water and alcohols, respectively. Plays a role in cell protection against oxidative stress by detoxifying peroxides. The protein is Peroxiredoxin 1 of Picrophilus torridus (strain ATCC 700027 / DSM 9790 / JCM 10055 / NBRC 100828 / KAW 2/3).